A 397-amino-acid polypeptide reads, in one-letter code: MTWDDHKKNFARLARDGGYTIAQYAAEFNLNPNTARRYLRAFKEDTRTADSRKPNKPVRKPLKSMIIDHSNDQHAGDHIAAEIAEKQRVNAVVSAAVENAKRQNKRINDRSDDHDVINRAHRTLRDRLERDTLDDDGERFEFEAGDYLIDNVEARKAARAMLRRSGADVLETTLLEKSLSHLLMLENARDTCIRLVQEMRDQQKDDDEGTPPEYRIASMLNSCSAQISSLINTIYSIRNNYRKESREAEKHALSMGQAGIVKLAYERKRENNWSVLEAAEFIEAHGGKVPPLMLEQIKADLRAPKTNTDDEENQTASGAPSLEDLDKIARERAASRRADAALWIEHRREEIADIVDTGGYGDVDAEGISNEAWLEQDLDEDEEEDEEVTRKLYGDDD.

The segment covering 43 to 53 has biased composition (basic and acidic residues); that stretch reads KEDTRTADSRK. Disordered stretches follow at residues 43–62, 304–325, and 356–397; these read KEDTRTADSRKPNKPVRKPL, PKTNTDDEENQTASGAPSLEDL, and DTGG…GDDD. The segment covering 374–387 has biased composition (acidic residues); sequence LEQDLDEDEEEDEE. Residues 388–397 are compositionally biased toward basic and acidic residues; sequence VTRKLYGDDD.

Multimer of two distinct subunits.

In terms of biological role, necessary for recognition and cleavage of the phage packaging site (pac), together with the pacB protein. Both are probably the two major subunits of the phage PACase. The sequence is that of Terminase A protein (pacA) from Escherichia coli (Bacteriophage P7).